A 269-amino-acid polypeptide reads, in one-letter code: uncharacterized protein (269 aa).

Residues 1-16 (MTDVPSKPPQTTPPPK) are compositionally biased toward pro residues. Disordered regions lie at residues 1–110 (MTDV…TISG) and 157–269 (ILQQ…PTIQ). A compositionally biased stretch (polar residues) spans 21–45 (APTTIFSSPPQLPDRSSLNISHTAS). A compositionally biased stretch (low complexity) spans 46–58 (TPTLTPTPLQQQQ). Over residues 80-93 (SFSNSPNRQTQSFI) the composition is skewed to polar residues. Over residues 159–181 (QQPQQSHSPQQQQQQHTPNHQQP) the composition is skewed to low complexity. Residues 182–195 (LSPQQQKDLAQKRS) are compositionally biased toward polar residues. Over residues 198 to 213 (PLPPRPNKNRPLPTPI) the composition is skewed to pro residues.

This is an uncharacterized protein from Dictyostelium discoideum (Social amoeba).